Consider the following 291-residue polypeptide: Acidic endochitinase (291 aa).

Positions Met1 to Ala22 are cleaved as a signal peptide. A GH18 domain is found at Gly23–Val291. 2 disulfides stabilise this stretch: Cys42-Cys89 and Cys72-Cys79. Glu149 serves as the catalytic Proton donor. Cys180 and Cys209 form a disulfide bridge.

It belongs to the glycosyl hydrolase 18 family. Chitinase class II subfamily.

It is found in the secreted. Its subcellular location is the cell wall. The catalysed reaction is Random endo-hydrolysis of N-acetyl-beta-D-glucosaminide (1-&gt;4)-beta-linkages in chitin and chitodextrins.. In terms of biological role, this protein functions as a defense against chitin containing fungal pathogens. This Nicotiana tabacum (Common tobacco) protein is Acidic endochitinase.